A 329-amino-acid chain; its full sequence is 4-hydroxythreonine-4-phosphate dehydrogenase (329 aa).

The substrate site is built by His136 and Thr137. 3 residues coordinate a divalent metal cation: His166, His211, and His266. Substrate contacts are provided by Lys274, Asn283, and Arg292.

Belongs to the PdxA family. In terms of assembly, homodimer. Zn(2+) is required as a cofactor. Requires Mg(2+) as cofactor. The cofactor is Co(2+).

It localises to the cytoplasm. It carries out the reaction 4-(phosphooxy)-L-threonine + NAD(+) = 3-amino-2-oxopropyl phosphate + CO2 + NADH. The protein operates within cofactor biosynthesis; pyridoxine 5'-phosphate biosynthesis; pyridoxine 5'-phosphate from D-erythrose 4-phosphate: step 4/5. In terms of biological role, catalyzes the NAD(P)-dependent oxidation of 4-(phosphooxy)-L-threonine (HTP) into 2-amino-3-oxo-4-(phosphooxy)butyric acid which spontaneously decarboxylates to form 3-amino-2-oxopropyl phosphate (AHAP). In Escherichia coli (strain SE11), this protein is 4-hydroxythreonine-4-phosphate dehydrogenase.